Here is a 378-residue protein sequence, read N- to C-terminus: Lysocardiolipin acyltransferase 1 (378 aa).

Transmembrane regions (helical) follow at residues 9–29 (FVVA…GPFL) and 46–66 (IVAT…GAKV). The short motif at 85 to 90 (HRTRMD) is the HXXXXD motif element. Helical transmembrane passes span 302 to 322 (LRVL…PMGT) and 336 to 358 (FAAM…LIEL).

This sequence belongs to the 1-acyl-sn-glycerol-3-phosphate acyltransferase family.

The protein localises to the endoplasmic reticulum membrane. The catalysed reaction is a 1-acyl-sn-glycero-3-phosphate + an acyl-CoA = a 1,2-diacyl-sn-glycero-3-phosphate + CoA. It catalyses the reaction a 1-acyl-sn-glycero-3-phospho-(1D-myo-inositol) + an acyl-CoA = a 1,2-diacyl-sn-glycero-3-phospho-(1D-myo-inositol) + CoA. It carries out the reaction 1-acyl-sn-glycero-3-phospho-(1'-sn-glycerol) + an acyl-CoA = a 1,2-diacyl-sn-glycero-3-phospho-(1'-sn-glycerol) + CoA. The enzyme catalyses 1-hexadecanoyl-sn-glycero-3-phosphate + (9Z)-octadecenoyl-CoA = 1-hexadecanoyl-2-(9Z-octadecenoyl)-sn-glycero-3-phosphate + CoA. The catalysed reaction is 1-(9Z-octadecenoyl)-sn-glycero-3-phosphate + (9Z)-octadecenoyl-CoA = 1,2-di-(9Z-octadecenoyl)-sn-glycero-3-phosphate + CoA. It catalyses the reaction 1-(9Z,12Z)-octadecadienoyl-sn-glycero-3-phosphate + (9Z)-octadecenoyl-CoA = 1-(9Z,12Z)-octadecadienoyl-2-(9Z)-octadecenoyl-sn-glycero-3-phosphate + CoA. It carries out the reaction 1-(9Z,12Z,15Z)-octadecatrienoyl-sn-glycero-3-phosphate + (9Z)-octadecenoyl-CoA = 1-(9Z,12Z,15Z)-octadecatrienoyl-2-(9Z)-octadecenoyl-sn-glycero-3-phosphate + CoA. The enzyme catalyses 1-(9Z-octadecenoyl)-sn-glycero-3-phosphate + hexadecanoyl-CoA = 1-(9Z)-octadecenoyl-2-hexadecanoyl-sn-glycero-3-phosphate + CoA. The catalysed reaction is 1-(9Z-octadecenoyl)-sn-glycero-3-phosphate + octadecanoyl-CoA = 1-(9Z-octadecenoyl)-2-octadecanoyl-sn-glycero-3-phosphate + CoA. It catalyses the reaction 1-acyl-sn-glycero-3-phospho-(1'-sn-glycerol) + (9Z)-octadecenoyl-CoA = 1-acyl-2-(9Z-octadecenoyl)-sn-glycero-3-phospho-(1'-sn-glycerol) + CoA. It carries out the reaction a 1-acyl-sn-glycero-3-phospho-(1D-myo-inositol) + (9Z)-octadecenoyl-CoA = a 1-acyl-2-(9Z-octadecenoyl)-sn-glycero-3-phospho-(1D-myo-inositol) + CoA. The enzyme catalyses 1-hexadecanoyl-sn-glycero-3-phospho-(1D-myo-inositol) + hexadecanoyl-CoA = 1,2-dihexadecanoyl-sn-glycero-3-phospho-(1D-myo-inositol) + CoA. The catalysed reaction is 1-hexadecanoyl-sn-glycero-3-phospho-(1D-myo-inositol) + octadecanoyl-CoA = 1-hexadecanoyl-2-octadecanoyl-sn-glycero-3-phospho-(1D-myo-inositol) + CoA. It catalyses the reaction 1-hexadecanoyl-sn-glycero-3-phospho-(1D-myo-inositol) + (9Z)-octadecenoyl-CoA = 1-hexadecanoyl-2-(9Z-octadecenoyl)-sn-glycero-3-phospho-(1D-myo-inositol) + CoA. It carries out the reaction 1-hexadecanoyl-sn-glycero-3-phospho-(1D-myo-inositol) + (9Z,12Z)-octadecadienoyl-CoA = 1-hexadecanoyl-2-(9Z,12Z-octadecadienoyl)-sn-glycero-3-phospho-(1D-myo-inositol) + CoA. The enzyme catalyses 1-hexadecanoyl-sn-glycero-3-phospho-(1D-myo-inositol) + (5Z,8Z,11Z,14Z)-eicosatetraenoyl-CoA = 1-hexadecanoyl-2-(5Z,8Z,11Z,14Z-eicosatetraenoyl)-sn-glycero-3-phospho-D-myo-inositol + CoA. The catalysed reaction is 1-hexadecanoyl-sn-glycero-3-phospho-(1'-sn-glycerol) + hexadecanoyl-CoA = 1,2-dihexadecanoyl-sn-glycero-3-phospho-(1'-sn-glycerol) + CoA. It catalyses the reaction 1-hexadecanoyl-sn-glycero-3-phospho-(1'-sn-glycerol) + octadecanoyl-CoA = 1-hexadecanoyl-2-octadecanoyl-sn-glycero-3-phospho-(1'-sn-glycerol) + CoA. It carries out the reaction 1-hexadecanoyl-sn-glycero-3-phospho-(1'-sn-glycerol) + (9Z)-octadecenoyl-CoA = 1-hexadecanoyl-2-(9Z-octadecenoyl)-sn-glycero-3-phospho-(1'-sn-glycerol) + CoA. The enzyme catalyses 1-hexadecanoyl-sn-glycero-3-phospho-(1'-sn-glycerol) + (9Z,12Z)-octadecadienoyl-CoA = 1-hexadecanoyl-2-(9Z,12Z-octadecadienoyl)-sn-glycero-3-phospho-(1'-sn-glycerol) + CoA. The catalysed reaction is 1-tetradecanoyl-sn-glycero-3-phospho-(1'-sn-glycerol) + (9Z)-octadecenoyl-CoA = 1-tetradecanoyl-2-(9Z-octadecenoyl)-sn-glycero-3-phospho-(1'-sn-glycerol) + CoA. It catalyses the reaction 1-octadecanoyl-sn-glycero-3-phospho-(1'-sn-glycerol) + (9Z)-octadecenoyl-CoA = 1-octadecanoyl-2-(9Z-octadecenoyl)-sn-glycero-3-phospho-(1'-sn-glycerol) + CoA. It carries out the reaction 1-(9Z-octadecenoyl)-sn-glycero-3-phospho-(1'-sn-glycerol) + (9Z)-octadecenoyl-CoA = 1,2-di-(9Z-octadecenoyl)-sn-glycero-3-phospho-(1'-sn-glycerol) + CoA. The enzyme catalyses 1-hexadecanoyl-sn-glycero-3-phospho-(1D-myo-inositol) + dodecanoyl-CoA = 1-hexadecanoyl-2-dodecanoyl-sn-glycero-3-phospho-(1D-myo-inositol) + CoA. The catalysed reaction is 1',3'-bis-[1-acyl-sn-glycero-3-phospho]-glycerol + (9Z)-octadecenoyl-CoA = 1'-[1-acyl-2-(9Z)-octadecenoyl-sn-glycero-3-phospho],3'-[1-acyl,2-hydroxy-sn-glycero-3-phospho]-glycerol + CoA. It catalyses the reaction 1'-[1,2-diacyl-sn-glycero-3-phospho],3'-[1-acyl-sn-glycero-3-phospho]-glycerol + (9Z)-octadecenoyl-CoA = 1'-[1,2-diacyl-sn-glycero-3-phospho],3'-[1-acyl,2-(9Z)-octadecenoyl-sn-glycero-3-phospho]-glycerol + CoA. It carries out the reaction 1'-[1,2-diacyl-sn-glycero-3-phospho],3'-[1-acyl-sn-glycero-3-phospho]-glycerol + (9Z,12Z)-octadecadienoyl-CoA = 1'-[1,2-diacyl-sn-glycero-3-phospho],3'-[1-acyl,2-(9Z,12Z)-octadecadienoyl-sn-glycero-3-phospho]-glycerol + CoA. The enzyme catalyses 1'-[1,2-diacyl-sn-glycero-3-phospho],3'-[1-acyl-sn-glycero-3-phospho]-glycerol + dodecanoyl-CoA = 1'-[1,2-diacyl-sn-glycero-3-phospho],3'-[1-acyl,2-dodecanoyl-sn-glycero-3-phospho]-glycerol + CoA. The catalysed reaction is 1',3'-bis-[1-acyl-sn-glycero-3-phospho]-glycerol + dodecanoyl-CoA = 1'-[1-acyl-2-dodecanoyl-sn-glycero-3-phospho],3'-[1-acyl,2-hydroxy-sn-glycero-3-phospho]-glycerol + CoA. It catalyses the reaction a 1-acyl-sn-glycero-3-phosphate + (9Z)-octadecenoyl-CoA = a 1-acyl-2-(9Z-octadecenoyl)-sn-glycero-3-phosphate + CoA. It carries out the reaction 1',3'-bis-[1-acyl-sn-glycero-3-phospho]-glycerol + (9Z,12Z)-octadecadienoyl-CoA = 1'-[1-acyl-2-(9Z,12Z)-octadecadienoyl-sn-glycero-3-phospho],3'-[1-acyl,2-hydroxy-sn-glycero-3-phospho]-glycerol + CoA. The enzyme catalyses 1',3'-bis-[1-acyl-sn-glycero-3-phospho]-glycerol + hexadecanoyl-CoA = 1'-[1-acyl-2-hexadecanoyl-sn-glycero-3-phospho],3'-[1-acyl,2-hydroxy-sn-glycero-3-phospho]-glycerol + CoA. The catalysed reaction is 1',3'-bis-[1-acyl-sn-glycero-3-phospho]-glycerol + octadecanoyl-CoA = 1'-[1-acyl-2-octadecanoyl-sn-glycero-3-phospho],3'-[1-acyl,2-hydroxy-sn-glycero-3-phospho]-glycerol + CoA. It catalyses the reaction 1'-[1,2-diacyl-sn-glycero-3-phospho],3'-[1-acyl-sn-glycero-3-phospho]-glycerol + octanoyl-CoA = 1'-[1,2-diacyl-sn-glycero-3-phospho],3'-[1-acyl,2-octanoyl-sn-glycero-3-phospho]-glycerol + CoA. It carries out the reaction 1',3'-bis-[1-acyl-sn-glycero-3-phospho]-glycerol + octanoyl-CoA = 1'-[1-acyl-2-octanoyl-sn-glycero-3-phospho],3'-[1-acyl,2-hydroxy-sn-glycero-3-phospho]-glycerol + CoA. The enzyme catalyses 1'-[1,2-diacyl-sn-glycero-3-phospho],3'-[1-acyl-sn-glycero-3-phospho]-glycerol + hexadecanoyl-CoA = 1'-[1,2-diacyl-sn-glycero-3-phospho],3'-[1-acyl,2-hexadecanoyl-sn-glycero-3-phospho]-glycerol + CoA. The catalysed reaction is 1'-[1,2-diacyl-sn-glycero-3-phospho],3'-[1-acyl-sn-glycero-3-phospho]-glycerol + (5Z,8Z,11Z,14Z)-eicosatetraenoyl-CoA = 1'-[1,2-diacyl-sn-glycero-3-phospho],3'-[1-acyl,2-(5Z,8Z,11Z,14Z)-eicosatetraenoyl-sn-glycero-3-phospho]-glycerol + CoA. It catalyses the reaction 1',3'-bis-[1-acyl-sn-glycero-3-phospho]-glycerol + (5Z,8Z,11Z,14Z)-eicosatetraenoyl-CoA = 1'-[1-acyl-2-(5Z,8Z,11Z,14Z)-eicosatetraenoyl-sn-glycero-3-phospho],3'-[1-acyl,2-hydroxy-sn-glycero-3-phospho]-glycerol + CoA. It carries out the reaction a 1-acyl-sn-glycero-3-phospho-(1D-myo-inositol) + octadecanoyl-CoA = a 1-acyl-2-octadecanoyl-sn-glycero-3-phospho-(1D-myo-inositol) + CoA. The enzyme catalyses a 2-acyl-sn-glycero-3-phospho-D-myo-inositol + octadecanoyl-CoA = 1-octadecanoyl-2-acyl-sn-glycero-3-phospho-1D-myo-inositol + CoA. The protein operates within phospholipid metabolism; CDP-diacylglycerol biosynthesis; CDP-diacylglycerol from sn-glycerol 3-phosphate: step 2/3. Functionally, exhibits acyl-CoA:lysocardiolipin acyltransferase (ALCAT) activity; catalyzes the reacylation of lyso-cardiolipin to cardiolipin (CL), a key step in CL remodeling. Recognizes both monolysocardiolipin and dilysocardiolipin as substrates with a preference for linoleoyl-CoA and oleoyl-CoA as acyl donors. Also exhibits 1-acyl-sn-glycerol-3-phosphate acyltransferase activity (AGPAT) activity; converts 1-acyl-sn-glycerol-3- phosphate (lysophosphatidic acid or LPA) into 1,2-diacyl-sn-glycerol-3- phosphate (phosphatidic acid or PA) by incorporating an acyl moiety at the sn-2 position of the glycerol backbone. Possesses both lysophosphatidylinositol acyltransferase (LPIAT) and lysophosphatidylglycerol acyltransferase (LPGAT) activities. Required for establishment of the hematopoietic and endothelial lineages. The sequence is that of Lysocardiolipin acyltransferase 1 (LCLAT1) from Gallus gallus (Chicken).